Here is a 538-residue protein sequence, read N- to C-terminus: MRHVQAELSPSSEPEAGPSQPPVRQGTLQGGLLMGYSPAGGATSPGVYQVSIFSPSAGASEPPRALKRPAPPTEGPRELKRGPGLGAREGLPPEEPSTVGLLSPEGLGLGLGVASQHFSHHGLCVVEHGGNTTSPWTSGTQSTPWLSSNASFNTLHTRDWAFPDQGGQGCLGETPGPAPSGQLHTLDTDLHNLAQIGGKSPVARVGNGSNPWPRESHGTANGHSPEHTPPGPGPPGPCPTKRRLLPAGETLDVSSEDEGPAPRRRRGTLGCPLAANSSDAKATPFWSHLLPGPKEPVLDPTDCSPMGRRLKGARRLKLSSLRTLRKGPGLLSPPSASPFPTPAVSRTLLGNFEESLLRGRFAPSGHIEGFTAEIGASGSYCPQHVTLPVTVTFFDVSEQNAPAPFLGVVDLTPLGRKGYSVPKVGTIQVTLFNPNQTVVKMFLVTFDFSDMPAAHMTFLRHRLFLVPVGEEGNASPTHRLLCYLLHLRFRSSRSGRLSLHGDIRLLFSRRSLELDTGLPYELQAVTEAPHNPRYSPLP.

3 disordered regions span residues 1 to 99, 165 to 185, and 199 to 270; these read MRHV…PSTV, QGGQ…QLHT, and KSPV…GTLG. Over residues 227–238 the composition is skewed to pro residues; it reads HTPPGPGPPGPC. A phosphoserine mark is found at serine 254 and serine 255. The required for macropage invasion stretch occupies residues 348-430; that stretch reads LLGNFEESLL…VPKVGTIQVT (83 aa). The segment at 436-444 is transactivation domain 1 (TAD1); that stretch reads QTVVKMFLV.

The protein belongs to the ATOS family.

It is found in the nucleus. In terms of biological role, transcription regulator that syncronizes transcriptional and translational programs to promote macrophage invasion of tissues. This Mus musculus (Mouse) protein is Atos homolog protein B.